The following is a 789-amino-acid chain: Probable 3-hydroxyacyl-CoA dehydrogenase (789 aa).

Belongs to the 3-hydroxyacyl-CoA dehydrogenase family.

It catalyses the reaction a (3S)-3-hydroxyacyl-CoA + NAD(+) = a 3-oxoacyl-CoA + NADH + H(+). Its pathway is lipid metabolism; fatty acid beta-oxidation. In terms of biological role, involved in the degradation of long-chain fatty acids. In Bacillus subtilis (strain 168), this protein is Probable 3-hydroxyacyl-CoA dehydrogenase (fadN).